We begin with the raw amino-acid sequence, 276 residues long: MIIDGVKISETKMERLKNEIEKIKNTGINPKMKIILIGNDYGSVVYSKAKMRRGSKLGIDVDLDRYDSISREDLIKLLKRYSQSDDIHGIMIETPVPGINYYDVVNEIPFYKDVDGMTSYNLGNLYLKNEFIAPATARAVVDILDYINIKSGNVAIINRSPVVGRPLSMMLLNRDFTVTVCHSRTVNINEITRSSDIVVVAVGKPNFLDRSYVSDKNIIIDVGINYLNGKTCGDADYENIKDYVNAITPVPGGVGPVTATDIFENFINGLKYQIKG.

NADP(+) is bound by residues 158–160 (NRS), S183, and I224.

Belongs to the tetrahydrofolate dehydrogenase/cyclohydrolase family. Homodimer.

It catalyses the reaction (6R)-5,10-methylene-5,6,7,8-tetrahydrofolate + NADP(+) = (6R)-5,10-methenyltetrahydrofolate + NADPH. The enzyme catalyses (6R)-5,10-methenyltetrahydrofolate + H2O = (6R)-10-formyltetrahydrofolate + H(+). Its pathway is one-carbon metabolism; tetrahydrofolate interconversion. Functionally, catalyzes the oxidation of 5,10-methylenetetrahydrofolate to 5,10-methenyltetrahydrofolate and then the hydrolysis of 5,10-methenyltetrahydrofolate to 10-formyltetrahydrofolate. This Picrophilus torridus (strain ATCC 700027 / DSM 9790 / JCM 10055 / NBRC 100828 / KAW 2/3) protein is Bifunctional protein FolD.